Reading from the N-terminus, the 500-residue chain is Proline/betaine transporter (500 aa).

Topologically, residues 1–37 (MLKRKKVKPITLRDVTIIDDGKLRKAITAASLGNAME) are cytoplasmic. The chain crosses the membrane as a helical span at residues 38-58 (WFDFGVYGFVAYALGKVFFPG). At 59–65 (ADPSVQM) the chain is on the periplasmic side. The chain crosses the membrane as a helical span at residues 66–86 (VAALATFSVPFLIRPLGGLFF). The Cytoplasmic portion of the chain corresponds to 87 to 97 (GMLGDKYGRQK). A helical membrane pass occupies residues 98–118 (ILAITIVIMSISTFCIGLIPS). Over 119 to 121 (YDT) the chain is Periplasmic. A helical membrane pass occupies residues 122-142 (IGIWAPILLLICKMAQGFSVG). Over 143 to 169 (GEYTGASIFVAEYSPDRKRGFMGSWLD) the chain is Cytoplasmic. The chain crosses the membrane as a helical span at residues 170–190 (FGSIAGFVLGAGVVVLISTIV). Residues 191 to 194 (GEAN) lie on the Periplasmic side of the membrane. Residues 195 to 215 (FLDWGWRIPFFIALPLGIIGL) form a helical membrane-spanning segment. The Cytoplasmic portion of the chain corresponds to 216–260 (YLRHALEETPAFQQHVDKLEQGDREGLQDGPKVSFKEIATKYWRS). The helical transmembrane segment at 261 to 281 (LLTCIGLVIATNVTYYMLLTY) threads the bilayer. The Periplasmic segment spans residues 282–297 (MPSYLSHNLHYSEDHG). A helical transmembrane segment spans residues 298–318 (VLIIIAIMIGMLFVQPVMGLL). At 319-325 (SDRFGRR) the chain is on the cytoplasmic side. A helical membrane pass occupies residues 326 to 346 (PFVLLGSVALFVLAIPAFILI). The Periplasmic segment spans residues 347–350 (NSNV). Residues 351-371 (IGLIFAGLLMLAVILNCFTGV) form a helical membrane-spanning segment. Residues 372-390 (MASTLPAMFPTHIRYSALA) lie on the Cytoplasmic side of the membrane. The helical transmembrane segment at 391–411 (AAFNISVLVAGLTPTLAAWLV) threads the bilayer. Topologically, residues 412 to 416 (ESSQN) are periplasmic. The helical transmembrane segment at 417–437 (LMMPAYYLMVVAVVGLITGVT) threads the bilayer. Residues 438–500 (MKETANRPLK…LVQQHPRIDE (63 aa)) lie on the Cytoplasmic side of the membrane. Residues 453-498 (ASDIQEAKEILVEHYDNIEQKIDDIDHEIADLQAKRTRLVQQHPRI) are a coiled coil.

This sequence belongs to the major facilitator superfamily. Metabolite:H+ Symporter (MHS) family (TC 2.A.1.6) family.

The protein resides in the cell inner membrane. Functionally, proton symporter that senses osmotic shifts and responds by importing osmolytes such as proline, glycine betaine, stachydrine, pipecolic acid, ectoine and taurine. It is both an osmosensor and an osmoregulator which is available to participate early in the bacterial osmoregulatory response. The protein is Proline/betaine transporter (proP) of Escherichia coli O157:H7.